The primary structure comprises 115 residues: Putative membrane protein insertion efficiency factor (115 aa).

Residues 81–115 (DPRPGRCGCKDAGPAVSAGSTEGNPGRRTDGTDPD) form a disordered region. Residues 105-115 (PGRRTDGTDPD) show a composition bias toward basic and acidic residues.

Belongs to the UPF0161 family.

The protein resides in the cell inner membrane. Could be involved in insertion of integral membrane proteins into the membrane. This is Putative membrane protein insertion efficiency factor from Rhodospirillum rubrum (strain ATCC 11170 / ATH 1.1.1 / DSM 467 / LMG 4362 / NCIMB 8255 / S1).